The following is a 296-amino-acid chain: Ceramide synthase LOH2 (296 aa).

The next 6 membrane-spanning stretches (helical) occupy residues V19–L39, L80–A100, L121–E141, I158–A178, F206–I226, and M254–V274. The TLC domain occupies V71 to K278. Phosphoserine occurs at positions 289 and 291.

Expressed ubiquitously with highest levels in pollen.

It localises to the endoplasmic reticulum membrane. The catalysed reaction is a sphingoid base + hexadecanoyl-CoA = an N-hexadecanoyl-sphingoid base + CoA + H(+). The enzyme catalyses sphinganine + hexadecanoyl-CoA = N-hexadecanoylsphinganine + CoA + H(+). It carries out the reaction sphing-4-enine + hexadecanoyl-CoA = N-hexadecanoylsphing-4-enine + CoA + H(+). It catalyses the reaction sphinga-(4E,8E)-dienine + hexadecanoyl-CoA = N-hexadecanoylsphinga-(4E,8E)-dienine + CoA + H(+). The catalysed reaction is sphinga-(4E,8Z)-dienine + hexadecanoyl-CoA = N-hexadecanoylsphinga-(4E,8Z)-dienine + CoA + H(+). It functions in the pathway sphingolipid metabolism. Inhibited by the mycotoxin fumonisin B(1), a sphingosine analog mycotoxins produced by pathogenic fungi. Activated by divalent cation such as magnesium Mg(2+), zinc Zn(2+), manganese Mn(2+) and calcium Ca(2+). In terms of biological role, prevents cell division in root meristems and promotes salicylic acid (SA) production and hypersensitive response (HR). Catalyzes the biosynthesis of ceramide sphingolipids with C(16) fatty acids, structural membrane lipids involved in membrane trafficking (e.g. early endosomes) and cell polarity (e.g. polar auxin transport related proteins); accepts only C16:0 fatty acids, but with a wide range of d18 sphingoid bases, such as sphinganine (d18:0) and palmitoyl-CoA. Mediates resistance to sphinganine-analog mycotoxins (SAMs, e.g. fumonisin B(1)) by restoring the sphingolipid biosynthesis. Could salvage the transport of GPI-anchored proteins from the endoplasmic reticulum to the Golgi apparatus in ceramides-depleted cells after SAM exposure. Contributes to hypoxic conditions tolerance (e.g. submergences), especially in the dark, by promoting the formation of very-long-chain (VLC) ceramide species (22:1, 24:1 and 26:1) and of VLC unsaturated ceramides, which are modulating CTR1-mediated ethylene signaling leading to endoplasmic reticulum (ER)-to-nucleus translocation of EIN2 and EIN3. In Arabidopsis thaliana (Mouse-ear cress), this protein is Ceramide synthase LOH2.